A 315-amino-acid chain; its full sequence is UDP-3-O-acyl-N-acetylglucosamine deacetylase (315 aa).

The Zn(2+) site is built by H78, H235, and D239. The active-site Proton donor is the H262.

It belongs to the LpxC family. Requires Zn(2+) as cofactor.

The enzyme catalyses a UDP-3-O-[(3R)-3-hydroxyacyl]-N-acetyl-alpha-D-glucosamine + H2O = a UDP-3-O-[(3R)-3-hydroxyacyl]-alpha-D-glucosamine + acetate. Its pathway is glycolipid biosynthesis; lipid IV(A) biosynthesis; lipid IV(A) from (3R)-3-hydroxytetradecanoyl-[acyl-carrier-protein] and UDP-N-acetyl-alpha-D-glucosamine: step 2/6. Functionally, catalyzes the hydrolysis of UDP-3-O-myristoyl-N-acetylglucosamine to form UDP-3-O-myristoylglucosamine and acetate, the committed step in lipid A biosynthesis. In Syntrophus aciditrophicus (strain SB), this protein is UDP-3-O-acyl-N-acetylglucosamine deacetylase.